We begin with the raw amino-acid sequence, 128 residues long: Sirohydrochlorin cobaltochelatase (128 aa).

His-9 acts as the Proton acceptor in catalysis. A Co(2+)-binding site is contributed by His-9. Substrate is bound by residues Lys-43 and 68–73 (FATGTH). His-73 is a binding site for Co(2+).

Belongs to the CbiX family. CbiXS subfamily. Homotetramer; dimer of dimers.

It carries out the reaction Co-sirohydrochlorin + 2 H(+) = sirohydrochlorin + Co(2+). It participates in cofactor biosynthesis; adenosylcobalamin biosynthesis; cob(II)yrinate a,c-diamide from sirohydrochlorin (anaerobic route): step 1/10. Catalyzes the insertion of Co(2+) into sirohydrochlorin as part of the anaerobic pathway to cobalamin biosynthesis. This is Sirohydrochlorin cobaltochelatase from Saccharolobus islandicus (strain Y.N.15.51 / Yellowstone #2) (Sulfolobus islandicus).